The chain runs to 396 residues: Phosphoglycerate kinase (396 aa).

Substrate contacts are provided by residues 21–23 (DFN), R36, 59–62 (HLGK), R119, and R156. Residues K206, E325, and 352–355 (GGDS) each bind ATP.

Belongs to the phosphoglycerate kinase family. In terms of assembly, monomer.

It is found in the cytoplasm. It carries out the reaction (2R)-3-phosphoglycerate + ATP = (2R)-3-phospho-glyceroyl phosphate + ADP. Its pathway is carbohydrate degradation; glycolysis; pyruvate from D-glyceraldehyde 3-phosphate: step 2/5. This Macrococcus caseolyticus (strain JCSC5402) (Macrococcoides caseolyticum) protein is Phosphoglycerate kinase.